We begin with the raw amino-acid sequence, 381 residues long: Acetylornithine deacetylase (381 aa).

Histidine 79 provides a ligand contact to Zn(2+). Aspartate 81 is an active-site residue. Zn(2+) is bound at residue aspartate 111. Glutamate 143 is a catalytic residue. Zn(2+) is bound by residues glutamate 144, glutamate 168, and histidine 354.

Belongs to the peptidase M20A family. ArgE subfamily. In terms of assembly, homodimer. It depends on Zn(2+) as a cofactor. The cofactor is Co(2+). Glutathione serves as cofactor.

The protein localises to the cytoplasm. The enzyme catalyses N(2)-acetyl-L-ornithine + H2O = L-ornithine + acetate. It functions in the pathway amino-acid biosynthesis; L-arginine biosynthesis; L-ornithine from N(2)-acetyl-L-ornithine (linear): step 1/1. In terms of biological role, catalyzes the hydrolysis of the amide bond of N(2)-acetylated L-amino acids. Cleaves the acetyl group from N-acetyl-L-ornithine to form L-ornithine, an intermediate in L-arginine biosynthesis pathway, and a branchpoint in the synthesis of polyamines. This chain is Acetylornithine deacetylase, found in Buchnera aphidicola subsp. Acyrthosiphon pisum (strain 5A).